The primary structure comprises 1187 residues: MIDDLIYFSNDAVTSTVLLNVGQEVIAVVEENKVSNGLKAIRVEAVSDKWEDDSKNSSKGLSDSSPRVLIGCVTSMLEGAGYISQTTYFSLESVCEGFHPCKGDWVEAEYWIRPGTWSSEAISVKPLRYKRVDKVCISSLCGRNGVIEDSIFFSLDSLKLPEGYIPRRHDIVNAVVVESSQSCYIWRALCMTPVKRDATLGEAPQEPYGALLLKNKGDIEVTRMTSFGTLKEGESKSIVIWIENKGKFSRELVSCRLANWDKAHQFRFETQGRSKSCPGAAAGSVPEGENVNSLNHHREDKTDEIPESRLANSTEISPDGCACKEESREKGNTPEKQEPEPGGLIPPGEKTHIVVTCSAKNPGRCKELLLLCFSDFLIGRHLEVSVVSSEEALIAVREPFSWKKPKSSQTLVSAKTTVVVTTQKRNSRRQLPSFLPQYPIPDRLKKCVEQKIDILTFQPLLAELLNMSNYKEKFSTLLWLEEIHAEIELKEYNMSRVVLKRKGDLLVLEVPGLAESRPSLYAGDKLILKSQEYNGHVIEYIGYVMEIHEEDVTLKLNPGFEQMYNFEPMDVEFTYNRTTSRRCHYALEQVIHLGVKVLFPEEIILQSPQVTGNWSLAQDTKNDGQSITNITRNDGQSMTKVTRNDSQSITNIIRNDGQSITNVTRNDGQPITKVTRNNSQSITNITRNDGQPITKNKKTVKDQTKHTTEERHVGTTDQPEKASSTAETMDEIQIPKARDKEFFNPVLNENQKLAVRRILSGDCRPLPYILFGPPGTGKTVTIIEAVLQVHYALPDSRILVCAPSNSAADLVCLRLHESKVPKPAAMVRVNATCRFEETIIDAIKPYCRDGEDIWRASRFRIIITTCSSAGLFYQIGVRVGYFTHVFVDEAGQASEPECLIPLGLISDINGQIVLAGDPMQLGPVIKSRLAMAYGLNVSMLERLMSRPAYLRDENAFGACGAYNPLLVTKLVKNYRSHSALLALPSRLFYHRELEVCADPKVVTSLLGWEKLPRKGFPLIFHGVRGNEAREGRSPSWFSPAEAVQVMRYCCLLARSVSSQVSSKDIGVITPYRKQVEKIKILLRNVDLTDIKVGSVEEFQGQEYLVIVISTVRSNEDRFEDDRYFLGFLSNSKRFNVAITRPKALLIILGNPHVLVRDPCFGALLEYSVSNGVYTGCDLPPELQALQK.

The interval 273–347 (RSKSCPGAAA…EPEPGGLIPP (75 aa)) is disordered. 2 stretches are compositionally biased toward basic and acidic residues: residues 296 to 307 (HHREDKTDEIPE) and 322 to 339 (ACKE…KQEP). Repeat copies occupy residues 642–652 (TRNDSQSITNI), 653–663 (IRNDGQSITNV), 664–674 (TRNDGQPITKV), 675–685 (TRNNSQSITNI), and 686–696 (TRNDGQPITKN). Positions 642–696 (TRNDSQSITNIIRNDGQSITNVTRNDGQPITKVTRNNSQSITNITRNDGQPITKN) are 5 X 11 AA tandem repeats of [TI]-R-N-[DN]-[GS]-Q-[SP]-I-T-[NK]-[IVN]. The disordered stretch occupies residues 686–727 (TRNDGQPITKNKKTVKDQTKHTTEERHVGTTDQPEKASSTAE). Residues 699–720 (TVKDQTKHTTEERHVGTTDQPE) are compositionally biased toward basic and acidic residues. 772–779 (GPPGTGKT) is an ATP binding site. Positions 888-891 (DEAG) match the DEAG box motif.

The protein belongs to the DNA2/NAM7 helicase family. SDE3 subfamily. As to quaternary structure, interacts with PIWIL1. Interacts with PIWIL2. Interacts with PIWIL4. Interacts with HSPA2. Interacts with PLD6. Isoform 1: Specifically expressed in testis. Isoform 1: In testis, present in pachytene spermatocytes but absent in postmeiotic spermatids (at protein level). Isoform 2: Present in cardiomyocytes (at protein level). Isoform 2: Heart specific. Isoform 3: Heart specific and is specifically expressed in cardiac myocytes.

The protein resides in the cytoplasm. It catalyses the reaction ATP + H2O = ADP + phosphate + H(+). Functionally, ATP-dependent RNA helicase required during spermatogenesis to repress transposable elements and prevent their mobilization, which is essential for germline integrity. Acts via the piRNA metabolic process, which mediates the repression of transposable elements during meiosis by forming complexes composed of piRNAs and Piwi proteins and governs the methylation and subsequent repression of transposons. Involved in the primary piRNA metabolic process. Specifically binds to piRNA precursors and promotes the generation of intermediate piRNA processing fragments that are subsequently loaded to Piwi proteins. Acts via its ATP-dependent RNA helicase activity: displays 5'-3' RNA unwinding activity and probably mediates unwinding and funneling of single-stranded piRNA precursor transcripts to the endonuclease that catalyzes the first cleavage step of piRNA processing to generate piRNA intermediate fragments that are subsequently loaded to Piwi proteins. In terms of biological role, may act downstream of MEF2C during heart formation. Acts as a cardiac-specific suppressor of cardiomyocyte hypertrophy and cell cycle progression, suggesting that it may suppress these processes through the regulation of CDKN1A. Such results however require additional evidence. The sequence is that of RNA helicase Mov10l1 from Mus musculus (Mouse).